Reading from the N-terminus, the 640-residue chain is Threonine--tRNA ligase (640 aa).

The tract at residues Asp-224 to Pro-525 is catalytic. Positions 323, 374, and 502 each coordinate Zn(2+).

It belongs to the class-II aminoacyl-tRNA synthetase family. In terms of assembly, homodimer. Requires Zn(2+) as cofactor.

It localises to the cytoplasm. The catalysed reaction is tRNA(Thr) + L-threonine + ATP = L-threonyl-tRNA(Thr) + AMP + diphosphate + H(+). Catalyzes the attachment of threonine to tRNA(Thr) in a two-step reaction: L-threonine is first activated by ATP to form Thr-AMP and then transferred to the acceptor end of tRNA(Thr). Also edits incorrectly charged L-seryl-tRNA(Thr). This chain is Threonine--tRNA ligase, found in Tropheryma whipplei (strain Twist) (Whipple's bacillus).